Reading from the N-terminus, the 463-residue chain is RuvB-like 2 (463 aa).

Alanine 2 is subject to N-acetylalanine. Residue lysine 9 forms a Glycyl lysine isopeptide (Lys-Gly) (interchain with G-Cter in SUMO2) linkage. 77 to 84 (GQPGTGKT) contacts ATP. The residue at position 437 (serine 437) is a Phosphoserine. Glycyl lysine isopeptide (Lys-Gly) (interchain with G-Cter in SUMO2) cross-links involve residues lysine 444 and lysine 456.

This sequence belongs to the RuvB family. In terms of assembly, forms homohexameric rings. Can form a dodecamer with RUVBL1 made of two stacked hexameric rings; however, even though RUVBL1 and RUVBL2 are present in equimolar ratio, the oligomeric status of each hexamer is not known. Oligomerization may regulate binding to nucleic acids and conversely, binding to nucleic acids may affect the dodecameric assembly. Interaction of the complex with DHX34 results in conformational changes of the N-terminus of the RUVBL2 subunits, resulting in loss of nucleotide binding ability and ATP hydrolysis of the complex. Interacts with the transcriptional activation domain of MYC. Interacts with ATF2. Component of the RNA polymerase II holoenzyme complex. May also act to bridge the LEF1/TCF1-CTNNB1 complex and TBP. Component of the NuA4 histone acetyltransferase complex which contains the catalytic subunit KAT5/TIP60 and the subunits EP400, TRRAP/PAF400, BRD8/SMAP, EPC1, DMAP1/DNMAP1, RUVBL1/TIP49, RUVBL2, ING3, actin, ACTL6A/BAF53A, MORF4L1/MRG15, MORF4L2/MRGX, MRGBP, YEATS4/GAS41, VPS72/YL1 and MEAF6. The NuA4 complex interacts with MYC and the adenovirus E1A protein. RUVBL2 interacts with EP400. Component of a NuA4-related complex which contains EP400, TRRAP/PAF400, SRCAP, BRD8/SMAP, EPC1, DMAP1/DNMAP1, RUVBL1/TIP49, RUVBL2, actin, ACTL6A/BAF53A, VPS72 and YEATS4/GAS41. Interacts with NPAT. Component of the chromatin-remodeling INO80 complex; specifically part of a complex module associated with the helicase ATP-binding and the helicase C-terminal domain of INO80. Component of some MLL1/MLL complex, at least composed of the core components KMT2A/MLL1, ASH2L, HCFC1/HCF1, WDR5 and RBBP5, as well as the facultative components BACC1, CHD8, E2F6, HSP70, INO80C, KANSL1, LAS1L, MAX, MCRS1, MGA, MYST1/MOF, PELP1, PHF20, PRP31, RING2, RUVB1/TIP49A, RUVB2/TIP49B, SENP3, TAF1, TAF4, TAF6, TAF7, TAF9 and TEX10. Interacts with IGHMBP2. Interacts with TELO2. Interacts with HINT1. Component of a SWR1-like complex. Component of the R2TP complex composed at least of RUVBL1, RUVBL2, RPAP3 and PIHD1. Component of the PAQosome complex which is responsible for the biogenesis of several protein complexes and which consists of R2TP complex members RUVBL1, RUVBL2, RPAP3 and PIH1D1, URI complex members PFDN2, PFDN6, PDRG1, UXT and URI1 as well as ASDURF, POLR2E and DNAAF10/WDR92. Interacts with ITFG1. Interacts with ZMYND10. Interacts with WAC; WAC positively regulates MTOR activity by promoting the assembly of the TTT complex composed of TELO2, TTI1 and TTI2 and the RUVBL complex composed of RUVBL1 and RUVBL2 into the TTT-RUVBL complex which leads to the dimerization of the mTORC1 complex and its subsequent activation. Forms a complex with APPL1 and APPL2. Interacts with ZNHIT2 (via HIT-type zinc finger) in the presence of ATP or ADP; shows a stronger interaction in the presence of ADP. The RUVBL1/RUVBL2 complex interacts with ZNHIT1 (via HIT-type zinc finger), ZNHIT3 (via HIT-type zinc finger), ZNHIT6 (via HIT-type zinc finger) and DDX59/ZNHIT5 (via HIT-type zinc finger) in the presence of ADP. Interacts with NOPCHAP1; the interaction is direct and disrupted upon ATP binding. Interacts with SMG1.

It is found in the nucleus matrix. It localises to the nucleus. The protein resides in the nucleoplasm. Its subcellular location is the cytoplasm. The protein localises to the membrane. It is found in the dynein axonemal particle. The catalysed reaction is ATP + H2O = ADP + phosphate + H(+). Functionally, possesses single-stranded DNA-stimulated ATPase and ATP-dependent DNA helicase (5' to 3') activity; hexamerization is thought to be critical for ATP hydrolysis and adjacent subunits in the ring-like structure contribute to the ATPase activity. Component of the NuA4 histone acetyltransferase complex which is involved in transcriptional activation of select genes principally by acetylation of nucleosomal histones H4 and H2A. This modification may both alter nucleosome-DNA interactions and promote interaction of the modified histones with other proteins which positively regulate transcription. This complex may be required for the activation of transcriptional programs associated with oncogene and proto-oncogene mediated growth induction, tumor suppressor mediated growth arrest and replicative senescence, apoptosis, and DNA repair. The NuA4 complex ATPase and helicase activities seem to be, at least in part, contributed by the association of RUVBL1 and RUVBL2 with EP400. NuA4 may also play a direct role in DNA repair when recruited to sites of DNA damage. Component of a SWR1-like complex that specifically mediates the removal of histone H2A.Z/H2AZ1 from the nucleosome. Proposed core component of the chromatin remodeling INO80 complex which exhibits DNA- and nucleosome-activated ATPase activity and catalyzes ATP-dependent nucleosome sliding. Plays an essential role in oncogenic transformation by MYC and also modulates transcriptional activation by the LEF1/TCF1-CTNNB1 complex. May also inhibit the transcriptional activity of ATF2. Involved in the endoplasmic reticulum (ER)-associated degradation (ERAD) pathway where it negatively regulates expression of ER stress response genes. May play a role in regulating the composition of the U5 snRNP complex. The chain is RuvB-like 2 (RUVBL2) from Bos taurus (Bovine).